We begin with the raw amino-acid sequence, 250 residues long: Triosephosphate isomerase (250 aa).

Position 9–11 (9–11) interacts with substrate; sequence NWK. His-96 functions as the Electrophile in the catalytic mechanism. Glu-166 functions as the Proton acceptor in the catalytic mechanism. Substrate contacts are provided by residues Gly-172, Ser-212, and 233 to 234; that span reads GG.

Belongs to the triosephosphate isomerase family. In terms of assembly, homodimer.

The protein resides in the cytoplasm. It catalyses the reaction D-glyceraldehyde 3-phosphate = dihydroxyacetone phosphate. It functions in the pathway carbohydrate biosynthesis; gluconeogenesis. Its pathway is carbohydrate degradation; glycolysis; D-glyceraldehyde 3-phosphate from glycerone phosphate: step 1/1. In terms of biological role, involved in the gluconeogenesis. Catalyzes stereospecifically the conversion of dihydroxyacetone phosphate (DHAP) to D-glyceraldehyde-3-phosphate (G3P). This chain is Triosephosphate isomerase, found in Chlorobium luteolum (strain DSM 273 / BCRC 81028 / 2530) (Pelodictyon luteolum).